Here is a 63-residue protein sequence, read N- to C-terminus: Large ribosomal subunit protein bL28 (63 aa).

The protein belongs to the bacterial ribosomal protein bL28 family.

The polypeptide is Large ribosomal subunit protein bL28 (Desulfatibacillum aliphaticivorans).